We begin with the raw amino-acid sequence, 395 residues long: Probable alcohol dehydrogenase EutG (395 aa).

Residues Asp57, 116 to 120 (GSVLD), 156 to 160 (TTAGT), Lys178, and 197 to 201 (LTEGV) contribute to the NAD(+) site. 4 residues coordinate Fe cation: Asp212, His216, His281, and His295. 2 residues coordinate NAD(+): His295 and Asp354.

Belongs to the iron-containing alcohol dehydrogenase family. Fe cation serves as cofactor.

The protein resides in the bacterial microcompartment. The enzyme catalyses ethanol + NAD(+) = acetaldehyde + NADH + H(+). Its pathway is amine and polyamine degradation; ethanolamine degradation. Its function is as follows. May act on the acetaldehyde produced from the degradation of ethanolamine, producing ethanol. Active on acetaldehyde and isobutyraldehyde in vitro. In vitro works equally well with NADH or NADPH. This Escherichia coli (strain K12) protein is Probable alcohol dehydrogenase EutG (eutG).